The primary structure comprises 373 residues: Indole glucosinolate O-methyltransferase 2 (373 aa).

Glycine 217, aspartate 240, aspartate 260, methionine 261, and lysine 274 together coordinate S-adenosyl-L-homocysteine. The active-site Proton acceptor is histidine 278.

Belongs to the class I-like SAM-binding methyltransferase superfamily. Cation-independent O-methyltransferase family.

The protein operates within secondary metabolite biosynthesis. Involved in indole glucosinolate biosynthesis. Catalyzes methoxylation reactions of the glucosinolate indole ring. Converts the hydroxy intermediates 4-hydroxy-indol-3-yl-methylglucosinolate (4OH-I3M) and 1-hydroxy-indol-3-yl-methylglucosinolate (1OH-I3M) to 4-methoxy-indol-3-yl-methylglucosinolate (4MO-I3M) and 1-methoxy-indol-3-yl-methylglucosinolate (1MO-I3M), respectively. This Arabidopsis thaliana (Mouse-ear cress) protein is Indole glucosinolate O-methyltransferase 2.